Here is a 224-residue protein sequence, read N- to C-terminus: Probable amino-acid permease protein YxeN (224 aa).

Helical transmembrane passes span 3–23 (TIDW…LPIT), 24–44 (LFMA…LALI), 58–78 (LYIS…IYYG), 91–111 (ALTA…AEIF), 157–177 (FIGL…EMFA), and 190–210 (FETY…YSIL). The region spanning 20–211 (LPITLFMAIA…VLTIIYSILQ (192 aa)) is the ABC transmembrane type-1 domain.

This sequence belongs to the binding-protein-dependent transport system permease family. In terms of assembly, the complex is composed of two ATP-binding proteins (YxeO), two transmembrane proteins (YxeN) and a solute-binding protein (YxeM).

It is found in the cell membrane. Functionally, probably part of the ABC transporter complex YxeMNO that could be involved in amino-acid import. May transport S-methylcysteine. Probably responsible for the translocation of the substrate across the membrane. The protein is Probable amino-acid permease protein YxeN (yxeN) of Bacillus subtilis (strain 168).